Consider the following 420-residue polypeptide: Cysteate-C-fatty acyltransferase (420 aa).

Residues 114–115, His-219, Thr-247, and Ala-249 each bind pyridoxal 5'-phosphate; that span reads GY. The residue at position 250 (Lys-250) is an N6-(pyridoxal phosphate)lysine.

It belongs to the class-II pyridoxal-phosphate-dependent aminotransferase family. Pyridoxal 5'-phosphate is required as a cofactor.

It carries out the reaction isopentadecanoyl-CoA + L-cysteate + H(+) = 3-oxocapnine + CO2 + CoA. The protein operates within lipid metabolism. Its function is as follows. Transferase involved in the biosynthesis of capnine, a sulfonolipid present in the outer membrane of gliding Bacteroidetes and essential for gliding motility. Catalyzes the formation of 3-dehydrocapnine from cysteate and isopentadecanoyl-CoA (13-methyl-myristoyl-CoA). In vitro, products are also detected when 13-methyl-myristic acid is substituted with tridecylic acid, myristic acid, pentadecanoic acid or palmitic acid. This Capnocytophaga ochracea (strain ATCC 27872 / DSM 7271 / CCUG 9716 / JCM 12966 / NCTC 12371 / SS31 / VPI 2845) (Bacteroides ochraceus) protein is Cysteate-C-fatty acyltransferase.